The sequence spans 490 residues: Cysteine protease 1 (490 aa).

An N-terminal signal peptide occupies residues Met-1–Ala-31. Positions Ala-32–Ala-154 are cleaved as a propeptide — activation peptide. Disulfide bonds link Cys-177-Cys-220, Cys-211-Cys-253, Cys-311-Cys-364, Cys-395-Cys-407, and Cys-401-Cys-422. Cys-180 is an active-site residue. Active-site residues include His-317 and Asn-339. Asn-356 is a glycosylation site (N-linked (GlcNAc...) asparagine). A propeptide spans Asn-379–Val-490 (removed in mature form).

The protein belongs to the peptidase C1 family. Highly expressed in the tapetum and developing pollen of the anther locules. Weakly expressed in root and germinating seed, hardly in the anther-less-flower and not detected in leaf.

Cysteine protease that may play a role in pollen development. May be regulated by the transcription factor UDT1 in developing anthers and play a role in tapetum development. Positively regulated by the transcription factor TDR in developing anthers and may play a role in tapetum programmed cell death (PCD). The chain is Cysteine protease 1 (CP1) from Oryza sativa subsp. japonica (Rice).